A 95-amino-acid polypeptide reads, in one-letter code: Co-chaperonin GroES (95 aa).

It belongs to the GroES chaperonin family. As to quaternary structure, heptamer of 7 subunits arranged in a ring. Interacts with the chaperonin GroEL.

It localises to the cytoplasm. Its function is as follows. Together with the chaperonin GroEL, plays an essential role in assisting protein folding. The GroEL-GroES system forms a nano-cage that allows encapsulation of the non-native substrate proteins and provides a physical environment optimized to promote and accelerate protein folding. GroES binds to the apical surface of the GroEL ring, thereby capping the opening of the GroEL channel. This is Co-chaperonin GroES from Chlorobium phaeobacteroides (strain DSM 266 / SMG 266 / 2430).